Consider the following 319-residue polypeptide: Ferrochelatase (319 aa).

Positions 194 and 275 each coordinate Fe cation.

The protein belongs to the ferrochelatase family.

It localises to the cytoplasm. The catalysed reaction is heme b + 2 H(+) = protoporphyrin IX + Fe(2+). It participates in porphyrin-containing compound metabolism; protoheme biosynthesis; protoheme from protoporphyrin-IX: step 1/1. In terms of biological role, catalyzes the ferrous insertion into protoporphyrin IX. The chain is Ferrochelatase from Hamiltonella defensa subsp. Acyrthosiphon pisum (strain 5AT).